Here is a 646-residue protein sequence, read N- to C-terminus: MRARLISYNGTTMYDLLKTIDDPADLRRLDRRQLQPLADELRAFVLDSVSKTGGHLSSNLGTVELTIALHYVFNTPNDRIVWDVGHQTYPHKILTGRRDQMHSLRQYDGISGFPRRSESEYDTFGTAHSSTSISAALGMAIGSQLNGDDRFSIAVIGDGAMTAGMAFEAMNNAGVSEDAKLLVILNDNDMSISPPVGALNRHLARLMSGRFYAAARAGVERVLSVAPPVLELARKLEEHAKGMVVPATLFEEFGFNYIGPIDGHDLDSLIPTLQNIRELRGPQFLHVVTKKGQGYKLAEADPVLYHGPGKFNPAEGIKPSPTPAKKTYTQVFGEWLCDEAERDSRVVGITPAMREGSGMVEFEKRFKDRYYDVGIAEQHAVTFAGGLATEGLKPVVAIYSTFLQRAYDQLIHDVALQNLPVVFAIDRAGLVGADGATHAGAYDLAFMRCIPNMTIMAASDENECRQMLHTALQQPNPTAVRYPRGAGTGVATVKEFTEIPLGKGEVRRRTSQPEGKRVAILAFGTMVAPSLAAGEELDATVANMRFVKPIDAALVRELAETHDYLVTVEEGCVMGGAGSACVEALMESGVIRPVIQLGLPDQFIDHGDPAKLLAQCGLDGAGIAKSIRERFLSPAADVADQAKRVA.

Residues His-86 and Ala-127 to Ser-129 each bind thiamine diphosphate. Position 158 (Asp-158) interacts with Mg(2+). Residues Gly-159–Ala-160, Asn-188, Tyr-295, and Glu-377 contribute to the thiamine diphosphate site. A Mg(2+)-binding site is contributed by Asn-188.

Belongs to the transketolase family. DXPS subfamily. In terms of assembly, homodimer. Mg(2+) serves as cofactor. Thiamine diphosphate is required as a cofactor.

It catalyses the reaction D-glyceraldehyde 3-phosphate + pyruvate + H(+) = 1-deoxy-D-xylulose 5-phosphate + CO2. The protein operates within metabolic intermediate biosynthesis; 1-deoxy-D-xylulose 5-phosphate biosynthesis; 1-deoxy-D-xylulose 5-phosphate from D-glyceraldehyde 3-phosphate and pyruvate: step 1/1. Catalyzes the acyloin condensation reaction between C atoms 2 and 3 of pyruvate and glyceraldehyde 3-phosphate to yield 1-deoxy-D-xylulose-5-phosphate (DXP). This is 1-deoxy-D-xylulose-5-phosphate synthase from Burkholderia ambifaria (strain ATCC BAA-244 / DSM 16087 / CCUG 44356 / LMG 19182 / AMMD) (Burkholderia cepacia (strain AMMD)).